Consider the following 327-residue polypeptide: Putative cyclin-dependent kinase F-2 (327 aa).

Positions 4–295 (YECLGKIGEG…AADALRCAWF (292 aa)) constitute a Protein kinase domain. Residues 10–18 (IGEGAAGVV) and K33 each bind ATP. The active-site Proton acceptor is D134. A Phosphothreonine modification is found at T167.

This sequence belongs to the protein kinase superfamily. CMGC Ser/Thr protein kinase family. CDC2/CDKX subfamily.

It catalyses the reaction L-seryl-[protein] + ATP = O-phospho-L-seryl-[protein] + ADP + H(+). The enzyme catalyses L-threonyl-[protein] + ATP = O-phospho-L-threonyl-[protein] + ADP + H(+). It carries out the reaction [DNA-directed RNA polymerase] + ATP = phospho-[DNA-directed RNA polymerase] + ADP + H(+). The polypeptide is Putative cyclin-dependent kinase F-2 (CDKF-2) (Oryza sativa subsp. japonica (Rice)).